Reading from the N-terminus, the 103-residue chain is Nucleoid-associated protein BH0035 (103 aa).

A compositionally biased stretch (low complexity) spans 1 to 20 (MKNMGQMMKQMQKMQKQMMK). Residues 1–29 (MKNMGQMMKQMQKMQKQMMKAQEELKEKT) form a disordered region.

Belongs to the YbaB/EbfC family. Homodimer.

Its subcellular location is the cytoplasm. It localises to the nucleoid. Binds to DNA and alters its conformation. May be involved in regulation of gene expression, nucleoid organization and DNA protection. This is Nucleoid-associated protein BH0035 from Halalkalibacterium halodurans (strain ATCC BAA-125 / DSM 18197 / FERM 7344 / JCM 9153 / C-125) (Bacillus halodurans).